A 385-amino-acid chain; its full sequence is Isocitrate dehydrogenase [NAD] subunit beta, mitochondrial (385 aa).

A mitochondrion-targeting transit peptide spans 1 to 34 (MAALSGVRWLTRALVSAGNPGAWRGLSTSAAAHA). Lys-199 is subject to N6-acetyllysine.

The protein belongs to the isocitrate and isopropylmalate dehydrogenases family. As to quaternary structure, heterooligomer of subunits alpha (IDH3A), beta (IDH3B), and gamma (IDH3G) in the apparent ratio of 2:1:1. The heterodimer containing one IDH3A and one IDH3B subunit and the heterodimer containing one IDH3A and one IDH3G subunit assemble into a heterotetramer (which contains two subunits of IDH3A, one of IDH3B and one of IDH3G) and further into the heterooctamer.

It is found in the mitochondrion. With respect to regulation, the heterotetramer and the heterodimer composed of IDH3A and IDH3G subunits can be allosterically activated by citrate (CIT) or/and ADP, and the two activators can act independently or synergistically. The heterodimer composed of IDH3A and IDH3B subunits cannot be allosterically regulated and the allosteric regulation of the heterotetramer is through the IDH3G subunit and not the IDH3B subunit. The IDH3G subunit contains the allosteric site which consists of a CIT-binding site and an ADP-binding site, and the binding of CIT and ADP causes conformational changes at the allosteric site which are transmitted to the active site in the catalytic subunit (IDH3A) through a cascade of conformational changes at the heterodimer interface, leading to stabilization of the isocitrate-binding at the active site and thus activation of the enzyme. ATP can activate the heterotetramer and the heterodimer composed of IDH3A and IDH3G subunits at low concentrations but inhibits their activities at high concentrations, whereas ATP exhibits only inhibitory effect on the heterodimer composed of IDH3A and IDH3B subunits. Functionally, plays a structural role to facilitate the assembly and ensure the full activity of the enzyme catalyzing the decarboxylation of isocitrate (ICT) into alpha-ketoglutarate. The heterodimer composed of the alpha (IDH3A) and beta (IDH3B) subunits and the heterodimer composed of the alpha (IDH3A) and gamma (IDH3G) subunits, have considerable basal activity but the full activity of the heterotetramer (containing two subunits of IDH3A, one of IDH3B and one of IDH3G) requires the assembly and cooperative function of both heterodimers. The chain is Isocitrate dehydrogenase [NAD] subunit beta, mitochondrial (IDH3B) from Homo sapiens (Human).